Consider the following 354-residue polypeptide: Uroporphyrinogen decarboxylase (354 aa).

Residues 35–39, Asp-84, Tyr-159, Ser-214, and His-333 each bind substrate; that span reads RQAGR.

This sequence belongs to the uroporphyrinogen decarboxylase family. In terms of assembly, homodimer.

Its subcellular location is the cytoplasm. The catalysed reaction is uroporphyrinogen III + 4 H(+) = coproporphyrinogen III + 4 CO2. It functions in the pathway porphyrin-containing compound metabolism; protoporphyrin-IX biosynthesis; coproporphyrinogen-III from 5-aminolevulinate: step 4/4. Its function is as follows. Catalyzes the decarboxylation of four acetate groups of uroporphyrinogen-III to yield coproporphyrinogen-III. This is Uroporphyrinogen decarboxylase from Nocardia farcinica (strain IFM 10152).